Reading from the N-terminus, the 84-residue chain is Large ribosomal subunit protein bL27 (84 aa).

The disordered stretch occupies residues 1–25 (MAHKKAGGSSRNGRDSNGQRRGVKR).

The protein belongs to the bacterial ribosomal protein bL27 family.

In Desulfatibacillum aliphaticivorans, this protein is Large ribosomal subunit protein bL27.